Consider the following 426-residue polypeptide: Tektin-1 (426 aa).

Coiled-coil stretches lie at residues 21–84 (KNQY…LEQL), 268–307 (LKETKAARDQLAAHLAKVMEEIACQEKNMTVLEKAILDQE), and 339–383 (KEVG…ENTI). Positions 396–426 (SNPLRDGGDQGQWARACAPTPSAEDGTSHTD) are disordered.

Belongs to the tektin family. As to quaternary structure, microtubule inner protein component of sperm flagellar doublet microtubules. Post-translationally, ubiquitinated, leading to its degradation. Deubiquitinated by USP16, promoting its stability.

The protein localises to the cytoplasm. Its subcellular location is the cytoskeleton. It localises to the cilium axoneme. It is found in the flagellum axoneme. Functionally, microtubule inner protein (MIP) part of the dynein-decorated doublet microtubules (DMTs) in cilia and flagellar axoneme. Forms filamentous polymers in the walls of ciliary and flagellar microtubules. This is Tektin-1 (TEKT1) from Canis lupus familiaris (Dog).